Consider the following 445-residue polypeptide: Exodeoxyribonuclease 7 large subunit (445 aa).

It belongs to the XseA family. In terms of assembly, heterooligomer composed of large and small subunits.

It is found in the cytoplasm. The enzyme catalyses Exonucleolytic cleavage in either 5'- to 3'- or 3'- to 5'-direction to yield nucleoside 5'-phosphates.. In terms of biological role, bidirectionally degrades single-stranded DNA into large acid-insoluble oligonucleotides, which are then degraded further into small acid-soluble oligonucleotides. This is Exodeoxyribonuclease 7 large subunit from Staphylococcus epidermidis (strain ATCC 35984 / DSM 28319 / BCRC 17069 / CCUG 31568 / BM 3577 / RP62A).